The primary structure comprises 351 residues: Ribosomal RNA large subunit methyltransferase M (351 aa).

Residues Ser186, 219–222 (APGG), Asp238, Asp258, and Asp274 contribute to the S-adenosyl-L-methionine site. Residue Lys303 is the Proton acceptor of the active site.

The protein belongs to the class I-like SAM-binding methyltransferase superfamily. RNA methyltransferase RlmE family. RlmM subfamily. Monomer.

The protein resides in the cytoplasm. The catalysed reaction is cytidine(2498) in 23S rRNA + S-adenosyl-L-methionine = 2'-O-methylcytidine(2498) in 23S rRNA + S-adenosyl-L-homocysteine + H(+). In terms of biological role, catalyzes the 2'-O-methylation at nucleotide C2498 in 23S rRNA. This is Ribosomal RNA large subunit methyltransferase M from Xylella fastidiosa (strain 9a5c).